The sequence spans 92 residues: Putative phosphotransferase enzyme IIB component BB_0367 (92 aa).

Residues 10 to 92 (IKVAEHIVEC…ILYMMNEQKQ (83 aa)) enclose the PTS EIIB type-1 domain.

Its subcellular location is the cytoplasm. Its function is as follows. The phosphoenolpyruvate-dependent sugar phosphotransferase system (PTS), a major carbohydrate active -transport system, catalyzes the phosphorylation of incoming sugar substrates concomitant with their translocation across the cell membrane. The polypeptide is Putative phosphotransferase enzyme IIB component BB_0367 (Borreliella burgdorferi (strain ATCC 35210 / DSM 4680 / CIP 102532 / B31) (Borrelia burgdorferi)).